The following is a 62-amino-acid chain: Photosystem II reaction center protein Z (62 aa).

The next 2 helical transmembrane spans lie at 8–28 (TLFA…VVFA) and 41–61 (FSGV…NSFV).

It belongs to the PsbZ family. In terms of assembly, PSII is composed of 1 copy each of membrane proteins PsbA, PsbB, PsbC, PsbD, PsbE, PsbF, PsbH, PsbI, PsbJ, PsbK, PsbL, PsbM, PsbT, PsbY, PsbZ, Psb30/Ycf12, at least 3 peripheral proteins of the oxygen-evolving complex and a large number of cofactors. It forms dimeric complexes.

The protein localises to the plastid. It is found in the chloroplast thylakoid membrane. May control the interaction of photosystem II (PSII) cores with the light-harvesting antenna, regulates electron flow through the 2 photosystem reaction centers. PSII is a light-driven water plastoquinone oxidoreductase, using light energy to abstract electrons from H(2)O, generating a proton gradient subsequently used for ATP formation. The chain is Photosystem II reaction center protein Z from Oltmannsiellopsis viridis (Marine flagellate).